The sequence spans 677 residues: L-type lectin-domain containing receptor kinase IV.2 (677 aa).

The N-terminal stretch at 1 to 22 is a signal peptide; sequence MFVKLKLIFFFFLLCQIMISSS. The Extracellular portion of the chain corresponds to 23 to 291; that stretch reads QNLNFTYNGF…EPRRISEFYK (269 aa). Residues 24–262 form a legume-lectin like region; the sequence is NLNFTYNGFH…EHFLVGWSFR (239 aa). N-linked (GlcNAc...) asparagine glycans are attached at residues Asn-26, Asn-57, Asn-81, Asn-128, Asn-134, Asn-171, Asn-186, and Asn-203. The helical transmembrane segment at 292 to 312 threads the bilayer; the sequence is IGMPLISLSLIFSIIFLAFYI. Over 313–677 the chain is Cytoplasmic; that stretch reads VRRKKKYEEE…IADSLLSGGR (365 aa). In terms of domain architecture, Protein kinase spans 347–625; the sequence is FKEKDLLGSG…LQYLRGDMAL (279 aa). Residues 353–361 and Lys-376 contribute to the ATP site; that span reads LGSGGFGRV. The active-site Proton acceptor is Asp-472.

This sequence in the C-terminal section; belongs to the protein kinase superfamily. Ser/Thr protein kinase family. It in the N-terminal section; belongs to the leguminous lectin family.

It is found in the cell membrane. The enzyme catalyses L-seryl-[protein] + ATP = O-phospho-L-seryl-[protein] + ADP + H(+). The catalysed reaction is L-threonyl-[protein] + ATP = O-phospho-L-threonyl-[protein] + ADP + H(+). Required during pollen development. In terms of biological role, involved in resistance response to the pathogenic bacteria Pseudomonas syringae. The polypeptide is L-type lectin-domain containing receptor kinase IV.2 (Arabidopsis thaliana (Mouse-ear cress)).